Consider the following 186-residue polypeptide: Putative 3-methyladenine DNA glycosylase (186 aa).

Belongs to the DNA glycosylase MPG family.

The sequence is that of Putative 3-methyladenine DNA glycosylase from Borreliella afzelii (strain PKo) (Borrelia afzelii).